The sequence spans 369 residues: tRNA/tmRNA (uracil-C(5))-methyltransferase (369 aa).

5 residues coordinate S-adenosyl-L-methionine: Q190, Y218, N223, E239, and D301. Catalysis depends on C326, which acts as the Nucleophile. E360 (proton acceptor) is an active-site residue.

This sequence belongs to the class I-like SAM-binding methyltransferase superfamily. RNA M5U methyltransferase family. TrmA subfamily.

It catalyses the reaction uridine(54) in tRNA + S-adenosyl-L-methionine = 5-methyluridine(54) in tRNA + S-adenosyl-L-homocysteine + H(+). It carries out the reaction uridine(341) in tmRNA + S-adenosyl-L-methionine = 5-methyluridine(341) in tmRNA + S-adenosyl-L-homocysteine + H(+). Its function is as follows. Dual-specificity methyltransferase that catalyzes the formation of 5-methyluridine at position 54 (m5U54) in all tRNAs, and that of position 341 (m5U341) in tmRNA (transfer-mRNA). The chain is tRNA/tmRNA (uracil-C(5))-methyltransferase from Vibrio cholerae serotype O1 (strain ATCC 39541 / Classical Ogawa 395 / O395).